A 122-amino-acid chain; its full sequence is uncharacterized protein (122 aa).

This is an uncharacterized protein from Dictyostelium discoideum (Social amoeba).